The sequence spans 542 residues: Glutamyl-tRNA(Gln) amidotransferase subunit B, mitochondrial (542 aa).

A mitochondrion-targeting transit peptide spans M1–I66.

It belongs to the GatB/GatE family. GatB subfamily. Subunit of the heterotrimeric GatFAB amidotransferase (AdT) complex, composed of A, B and F subunits.

It is found in the mitochondrion. It carries out the reaction L-glutamyl-tRNA(Gln) + L-glutamine + ATP + H2O = L-glutaminyl-tRNA(Gln) + L-glutamate + ADP + phosphate + H(+). Allows the formation of correctly charged Gln-tRNA(Gln) through the transamidation of misacylated Glu-tRNA(Gln) in the mitochondria. The reaction takes place in the presence of glutamine and ATP through an activated gamma-phospho-Glu-tRNA(Gln). This Zygosaccharomyces rouxii (strain ATCC 2623 / CBS 732 / NBRC 1130 / NCYC 568 / NRRL Y-229) protein is Glutamyl-tRNA(Gln) amidotransferase subunit B, mitochondrial.